The sequence spans 353 residues: UPF0283 membrane protein YcjF (353 aa).

Basic and acidic residues predominate over residues 1–19; that stretch reads MSEPLKPRIDFAEPLKEEP. Residues 1 to 35 form a disordered region; it reads MSEPLKPRIDFAEPLKEEPTSAFKAQQTFSEAESR. Transmembrane regions (helical) follow at residues 70–90, 100–120, and 213–233; these read MVMG…VQWT, VALG…GSVV, and ESTL…FIAW.

It belongs to the UPF0283 family.

The protein localises to the cell inner membrane. The sequence is that of UPF0283 membrane protein YcjF from Salmonella paratyphi B (strain ATCC BAA-1250 / SPB7).